Consider the following 312-residue polypeptide: Protein-methionine-sulfoxide reductase catalytic subunit MsrP (312 aa).

A signal peptide (tat-type signal) is located at residues 1–45 (MPVYRPPRIAASEITPERFFLDRRSFLAAAGGLVLGGTGMAHAAA). Mo-molybdopterin is bound by residues Asn69, 72 to 73 (YE), Cys126, Thr161, Asn211, Arg216, and 227 to 229 (GIK).

It belongs to the MsrP family. Heterodimer of a catalytic subunit (MsrP) and a heme-binding subunit (MsrQ). It depends on Mo-molybdopterin as a cofactor. In terms of processing, predicted to be exported by the Tat system. The position of the signal peptide cleavage has not been experimentally proven.

It is found in the periplasm. The catalysed reaction is L-methionyl-[protein] + a quinone + H2O = L-methionyl-(S)-S-oxide-[protein] + a quinol. It carries out the reaction L-methionyl-[protein] + a quinone + H2O = L-methionyl-(R)-S-oxide-[protein] + a quinol. In terms of biological role, part of the MsrPQ system that repairs oxidized periplasmic proteins containing methionine sulfoxide residues (Met-O), using respiratory chain electrons. Thus protects these proteins from oxidative-stress damage caused by reactive species of oxygen and chlorine generated by the host defense mechanisms. MsrPQ is essential for the maintenance of envelope integrity under bleach stress, rescuing a wide series of structurally unrelated periplasmic proteins from methionine oxidation. The catalytic subunit MsrP is non-stereospecific, being able to reduce both (R-) and (S-) diastereoisomers of methionine sulfoxide. This Sinorhizobium fredii (strain NBRC 101917 / NGR234) protein is Protein-methionine-sulfoxide reductase catalytic subunit MsrP.